The primary structure comprises 1132 residues: DNA-directed RNA polymerase subunit beta (1132 aa).

The protein belongs to the RNA polymerase beta chain family. The RNAP catalytic core consists of 2 alpha, 1 beta, 1 beta' and 1 omega subunit. When a sigma factor is associated with the core the holoenzyme is formed, which can initiate transcription.

The catalysed reaction is RNA(n) + a ribonucleoside 5'-triphosphate = RNA(n+1) + diphosphate. Functionally, DNA-dependent RNA polymerase catalyzes the transcription of DNA into RNA using the four ribonucleoside triphosphates as substrates. The protein is DNA-directed RNA polymerase subunit beta of Carboxydothermus hydrogenoformans (strain ATCC BAA-161 / DSM 6008 / Z-2901).